The following is a 174-amino-acid chain: Endoribonuclease YbeY (174 aa).

Residues His-133, His-137, and His-143 each contribute to the Zn(2+) site.

This sequence belongs to the endoribonuclease YbeY family. Zn(2+) serves as cofactor.

The protein resides in the cytoplasm. Single strand-specific metallo-endoribonuclease involved in late-stage 70S ribosome quality control and in maturation of the 3' terminus of the 16S rRNA. The sequence is that of Endoribonuclease YbeY from Paracoccus denitrificans (strain Pd 1222).